Reading from the N-terminus, the 514-residue chain is 2,3-bisphosphoglycerate-independent phosphoglycerate mutase (514 aa).

Residues D14 and S64 each contribute to the Mn(2+) site. The Phosphoserine intermediate role is filled by S64. Substrate is bound by residues H125, 155–156 (RD), R187, R193, 263–266 (RADR), and K336. Mn(2+)-binding residues include D403, H407, D444, H445, and H463.

Belongs to the BPG-independent phosphoglycerate mutase family. In terms of assembly, monomer. The cofactor is Mn(2+).

The catalysed reaction is (2R)-2-phosphoglycerate = (2R)-3-phosphoglycerate. It functions in the pathway carbohydrate degradation; glycolysis; pyruvate from D-glyceraldehyde 3-phosphate: step 3/5. Catalyzes the interconversion of 2-phosphoglycerate and 3-phosphoglycerate. The sequence is that of 2,3-bisphosphoglycerate-independent phosphoglycerate mutase from Shewanella sediminis (strain HAW-EB3).